A 36-amino-acid polypeptide reads, in one-letter code: Alpha-conotoxin-like Pu1.3 (36 aa).

Residues 1–21 constitute a propeptide that is removed on maturation; the sequence is SDGRNAGADRKGFGLISQMFK. 2 disulfides stabilise this stretch: C24–C30 and C25–C36.

The protein belongs to the conotoxin A superfamily. As to expression, expressed by the venom duct.

It localises to the secreted. Alpha-conotoxins act on postsynaptic membranes, they bind to the nicotinic acetylcholine receptors (nAChR) and thus inhibit them. This is Alpha-conotoxin-like Pu1.3 from Conus pulicarius (Flea-bitten cone).